A 344-amino-acid polypeptide reads, in one-letter code: Anthranilate phosphoribosyltransferase (344 aa).

Residues glycine 84, 87–88 (GD), threonine 92, 94–97 (NIST), 112–120 (KHGGRSVSS), and serine 124 contribute to the 5-phospho-alpha-D-ribose 1-diphosphate site. Glycine 84 is a binding site for anthranilate. Serine 96 lines the Mg(2+) pocket. Arginine 170 lines the anthranilate pocket. 2 residues coordinate Mg(2+): aspartate 229 and glutamate 230.

The protein belongs to the anthranilate phosphoribosyltransferase family. In terms of assembly, homodimer. Mg(2+) is required as a cofactor.

It carries out the reaction N-(5-phospho-beta-D-ribosyl)anthranilate + diphosphate = 5-phospho-alpha-D-ribose 1-diphosphate + anthranilate. Its pathway is amino-acid biosynthesis; L-tryptophan biosynthesis; L-tryptophan from chorismate: step 2/5. Its function is as follows. Catalyzes the transfer of the phosphoribosyl group of 5-phosphorylribose-1-pyrophosphate (PRPP) to anthranilate to yield N-(5'-phosphoribosyl)-anthranilate (PRA). This is Anthranilate phosphoribosyltransferase from Janthinobacterium sp. (strain Marseille) (Minibacterium massiliensis).